The chain runs to 91 residues: UPF0367 protein cce_2199 (91 aa).

The protein belongs to the UPF0367 family.

The chain is UPF0367 protein cce_2199 from Crocosphaera subtropica (strain ATCC 51142 / BH68) (Cyanothece sp. (strain ATCC 51142)).